The chain runs to 130 residues: Small ribosomal subunit protein uS8 (130 aa).

It belongs to the universal ribosomal protein uS8 family. Part of the 30S ribosomal subunit. Contacts proteins S5 and S12.

In terms of biological role, one of the primary rRNA binding proteins, it binds directly to 16S rRNA central domain where it helps coordinate assembly of the platform of the 30S subunit. The chain is Small ribosomal subunit protein uS8 from Yersinia pseudotuberculosis serotype O:1b (strain IP 31758).